Reading from the N-terminus, the 215-residue chain is Probable phosphoglycerate mutase GpmB (215 aa).

Substrate-binding positions include 8-15 (RHGETQWN), 21-22 (QG), R58, K60, 82-85 (ELDM), 104-105 (RR), and 151-152 (GI). H9 serves as the catalytic Tele-phosphohistidine intermediate. The active-site Proton donor/acceptor is E82.

It belongs to the phosphoglycerate mutase family. GpmB subfamily.

The enzyme catalyses (2R)-2-phosphoglycerate = (2R)-3-phosphoglycerate. Its pathway is carbohydrate degradation; glycolysis; pyruvate from D-glyceraldehyde 3-phosphate: step 3/5. The sequence is that of Probable phosphoglycerate mutase GpmB from Salmonella arizonae (strain ATCC BAA-731 / CDC346-86 / RSK2980).